A 262-amino-acid chain; its full sequence is NADPH-dependent 7-cyano-7-deazaguanine reductase (262 aa).

69–71 (IES) contributes to the substrate binding site. 71–72 (SK) serves as a coordination point for NADPH. Catalysis depends on Cys170, which acts as the Thioimide intermediate. Asp177 acts as the Proton donor in catalysis. 209-210 (HE) provides a ligand contact to substrate. 238 to 239 (RG) serves as a coordination point for NADPH.

Belongs to the GTP cyclohydrolase I family. QueF type 2 subfamily. As to quaternary structure, homodimer.

It is found in the cytoplasm. The catalysed reaction is 7-aminomethyl-7-carbaguanine + 2 NADP(+) = 7-cyano-7-deazaguanine + 2 NADPH + 3 H(+). It functions in the pathway tRNA modification; tRNA-queuosine biosynthesis. Functionally, catalyzes the NADPH-dependent reduction of 7-cyano-7-deazaguanine (preQ0) to 7-aminomethyl-7-deazaguanine (preQ1). In Buchnera aphidicola subsp. Schizaphis graminum (strain Sg), this protein is NADPH-dependent 7-cyano-7-deazaguanine reductase.